The sequence spans 192 residues: Group XIIA secretory phospholipase A2 (192 aa).

Residues 1 to 25 (MVTPRPAPARSPALLLLLLLATARG) form the signal peptide. Ca(2+) is bound by residues Gly-91, Pro-93, and Phe-95. Residue His-113 is part of the active site. Asp-114 provides a ligand contact to Ca(2+). Residue Asp-128 is part of the active site.

It belongs to the phospholipase A2 family. It depends on Ca(2+) as a cofactor.

It localises to the secreted. The protein localises to the cytoplasm. The enzyme catalyses a 1,2-diacyl-sn-glycero-3-phosphocholine + H2O = a 1-acyl-sn-glycero-3-phosphocholine + a fatty acid + H(+). Functionally, PA2 catalyzes the calcium-dependent hydrolysis of the 2-acyl groups in 3-sn-phosphoglycerides. Does not exhibit detectable activity toward sn-2-arachidonoyl- or linoleoyl-phosphatidylcholine or -phosphatidylethanolamine. The chain is Group XIIA secretory phospholipase A2 (Pla2g12a) from Mus musculus (Mouse).